The following is a 104-amino-acid chain: Large ribosomal subunit protein bL28 (104 aa).

It belongs to the bacterial ribosomal protein bL28 family.

The chain is Large ribosomal subunit protein bL28 from Wolbachia sp. subsp. Brugia malayi (strain TRS).